The chain runs to 614 residues: Chaperone protein DnaK (614 aa).

Phosphothreonine; by autocatalysis is present on Thr176. Positions 576–614 (YQQQQSQGGEAGAANGDASKKDDNTVDGDFHEVHDDDKK) are disordered. Positions 577 to 589 (QQQQSQGGEAGAA) are enriched in low complexity. Residues 593–614 (ASKKDDNTVDGDFHEVHDDDKK) show a composition bias toward basic and acidic residues.

The protein belongs to the heat shock protein 70 family.

Its function is as follows. Acts as a chaperone. This Fructilactobacillus sanfranciscensis (Lactobacillus sanfranciscensis) protein is Chaperone protein DnaK.